Reading from the N-terminus, the 178-residue chain is Large ribosomal subunit protein uL6 (178 aa).

Belongs to the universal ribosomal protein uL6 family. In terms of assembly, part of the 50S ribosomal subunit.

Its function is as follows. This protein binds to the 23S rRNA, and is important in its secondary structure. It is located near the subunit interface in the base of the L7/L12 stalk, and near the tRNA binding site of the peptidyltransferase center. The chain is Large ribosomal subunit protein uL6 from Micrococcus luteus (Micrococcus lysodeikticus).